The chain runs to 465 residues: Branchpoint-bridging protein (465 aa).

The span at 1 to 11 shows a compositional bias: basic and acidic residues; that stretch reads MSERREEERGR. The tract at residues 1–22 is disordered; it reads MSERREEERGRTGFSMKKNHNS. The 67-residue stretch at 139-205 folds into the KH domain; that stretch reads YIPVSQYPQI…DFSDPLHCLI (67 aa). CCHC-type zinc fingers lie at residues 257 to 274 and 282 to 299; these read RPCA…ECPH and IICR…DCTS. 2 disordered regions span residues 324–391 and 431–465; these read AVDQ…LSHQ and INDV…PGLN. Composition is skewed to polar residues over residues 339 to 361 and 377 to 391; these read RNHN…NKRA and QINP…LSHQ.

Belongs to the BBP/SF1 family.

The protein localises to the nucleus. Functionally, necessary for the splicing of pre-mRNA. Has a role in the recognition of the branch site (5'-UACUAAC-3'), the pyrimidine tract and the 3'-splice site at the 3'-end of introns. This is Branchpoint-bridging protein (BBP) from Candida glabrata (strain ATCC 2001 / BCRC 20586 / JCM 3761 / NBRC 0622 / NRRL Y-65 / CBS 138) (Yeast).